The primary structure comprises 414 residues: Putative competence-damage inducible protein (414 aa).

Belongs to the CinA family.

In Listeria monocytogenes serotype 4a (strain HCC23), this protein is Putative competence-damage inducible protein.